Reading from the N-terminus, the 23-residue chain is Caerulein precursor fragment BM2 (23 aa).

As to expression, expressed by the skin glands.

The protein localises to the secreted. Antimicrobial peptide. This chain is Caerulein precursor fragment BM2, found in Xenopus boumbaensis (Mawa clawed frog).